The chain runs to 491 residues: Glutamyl-tRNA(Gln) amidotransferase subunit A (491 aa).

Active-site charge relay system residues include lysine 77 and serine 152. The active-site Acyl-ester intermediate is the serine 176.

Belongs to the amidase family. GatA subfamily. Heterotrimer of A, B and C subunits.

The enzyme catalyses L-glutamyl-tRNA(Gln) + L-glutamine + ATP + H2O = L-glutaminyl-tRNA(Gln) + L-glutamate + ADP + phosphate + H(+). In terms of biological role, allows the formation of correctly charged Gln-tRNA(Gln) through the transamidation of misacylated Glu-tRNA(Gln) in organisms which lack glutaminyl-tRNA synthetase. The reaction takes place in the presence of glutamine and ATP through an activated gamma-phospho-Glu-tRNA(Gln). The sequence is that of Glutamyl-tRNA(Gln) amidotransferase subunit A from Chlamydia felis (strain Fe/C-56) (Chlamydophila felis).